The chain runs to 2346 residues: Highly reducing polyketide synthase claI (2346 aa).

The Ketosynthase family 3 (KS3) domain maps to threonine 10 to aspartate 412. Active-site for beta-ketoacyl synthase activity residues include cysteine 183, histidine 295, and histidine 335. Residues isoleucine 530–glutamate 842 are malonyl-CoA:ACP transacylase (MAT) domain. Serine 622 serves as the catalytic For malonyltransferase activity. Positions histidine 912–serine 1048 are N-terminal hotdog fold. Positions histidine 912–aspartate 1213 are dehydratase (DH) domain. The region spanning histidine 912 to glutamine 1218 is the PKS/mFAS DH domain. Histidine 944 acts as the Proton acceptor; for dehydratase activity in catalysis. The C-terminal hotdog fold stretch occupies residues isoleucine 1060–glutamine 1218. Aspartate 1124 acts as the Proton donor; for dehydratase activity in catalysis. The enoyl reductase (ER) domain stretch occupies residues glycine 1633 to isoleucine 1946. The tract at residues threonine 1972–alanine 2151 is ketoreductase (KR) domain. The region spanning serine 2258–valine 2336 is the Carrier domain. Serine 2296 carries the post-translational modification O-(pantetheine 4'-phosphoryl)serine.

It depends on pantetheine 4'-phosphate as a cofactor.

It functions in the pathway secondary metabolite biosynthesis. Its function is as follows. Highly reducing polyketide synthase; part of the cla gene cluster that produces clavatol and ortho-quinone methide. The clavatol biosynthesis cluster cla and the terrestric acid cluster tra are both involved in the production of peniphenones and penilactones. The non-reducing PKS claF is responsible for the formation of clavatol from successive condensations of 3 malonyl-CoA units, presumably with a simple acetyl-CoA starter unit, and 2 methylation steps. The esterase claE probably collaborates with claF by catalyzing the hydrolysis of ACP-bound acyl intermediates to free the ACP from stalled intermediates. The clavatol oxidase claD then converts clavatol to hydroxyclavatol. Spontaneous dehydration of hydroxyclavatol leads to the accumulation of the highly active ortho-quinone methide. On the other hand, the PKS-NRPS hybrid traA is involved in the formation of crustosic acid, with the help of traB and traD. The polyketide synthase module (PKS) of traA is responsible for the synthesis of the polyketide backbone via the condensation of an acetyl-CoA starter unit with 3 malonyl-CoA units. The downstream nonribosomal peptide synthetase (NRPS) module then amidates the carboxyl end of the polyketide with L-malic acid. Because traA lacks a designated enoylreductase (ER) domain, the required activity is provided the enoyl reductase traG. Crustosic acid undergoes decarboxylation and isomerization to the terrestric acid, catalyzed by the 2-oxoglutarate-dependent dioxygenase traH. Both acids are further converted to the 2 gamma-butyrolactones (R)-5-methyltetronic acid and (S)-5-carboxylmethyltetronic acid, with involvement of the cytochrome P450 monooxygenase claJ. Spontaneous addition of the methide to these gamma-butyrolactones leads to peniphenone D and penilactone D, which undergo again stereospecific attacking by methide to give penilactones A and B. The function of the highly reducing polyketide synthase claI has not been investigated yet. This is Highly reducing polyketide synthase claI from Penicillium crustosum (Blue mold fungus).